Here is a 160-residue protein sequence, read N- to C-terminus: Large ribosomal subunit protein uL22c (160 aa).

This sequence belongs to the universal ribosomal protein uL22 family. In terms of assembly, part of the 50S ribosomal subunit.

The protein localises to the plastid. It is found in the chloroplast. Functionally, this protein binds specifically to 23S rRNA. In terms of biological role, the globular domain of the protein is located near the polypeptide exit tunnel on the outside of the subunit, while an extended beta-hairpin is found that lines the wall of the exit tunnel in the center of the 70S ribosome. The sequence is that of Large ribosomal subunit protein uL22c (rpl22) from Arabis hirsuta (Hairy rock-cress).